A 140-amino-acid polypeptide reads, in one-letter code: Transcription antitermination protein NusB (140 aa).

This sequence belongs to the NusB family.

Functionally, involved in transcription antitermination. Required for transcription of ribosomal RNA (rRNA) genes. Binds specifically to the boxA antiterminator sequence of the ribosomal RNA (rrn) operons. This Pseudothermotoga lettingae (strain ATCC BAA-301 / DSM 14385 / NBRC 107922 / TMO) (Thermotoga lettingae) protein is Transcription antitermination protein NusB.